The following is a 511-amino-acid chain: Maturase K (511 aa).

The protein belongs to the intron maturase 2 family. MatK subfamily.

It localises to the plastid. Its subcellular location is the chloroplast. Its function is as follows. Usually encoded in the trnK tRNA gene intron. Probably assists in splicing its own and other chloroplast group II introns. The protein is Maturase K of Hordeum vulgare subsp. spontaneum (Wild barley).